A 376-amino-acid polypeptide reads, in one-letter code: GTPase Obg (376 aa).

The Obg domain maps to M1 to I158. The OBG-type G domain occupies A159–K359. GTP contacts are provided by residues G165–S172, F190–T194, D212–G215, T280–D283, and S340–A342. Residues S172 and T192 each contribute to the Mg(2+) site.

This sequence belongs to the TRAFAC class OBG-HflX-like GTPase superfamily. OBG GTPase family. In terms of assembly, monomer. It depends on Mg(2+) as a cofactor.

The protein resides in the cytoplasm. An essential GTPase which binds GTP, GDP and possibly (p)ppGpp with moderate affinity, with high nucleotide exchange rates and a fairly low GTP hydrolysis rate. Plays a role in control of the cell cycle, stress response, ribosome biogenesis and in those bacteria that undergo differentiation, in morphogenesis control. In Campylobacter curvus (strain 525.92), this protein is GTPase Obg.